The primary structure comprises 143 residues: Nucleoside diphosphate kinase (143 aa).

ATP contacts are provided by K10, F58, R86, T92, R103, and N113. The active-site Pros-phosphohistidine intermediate is the H116.

This sequence belongs to the NDK family. In terms of assembly, homotetramer. It depends on Mg(2+) as a cofactor.

It is found in the cytoplasm. It carries out the reaction a 2'-deoxyribonucleoside 5'-diphosphate + ATP = a 2'-deoxyribonucleoside 5'-triphosphate + ADP. It catalyses the reaction a ribonucleoside 5'-diphosphate + ATP = a ribonucleoside 5'-triphosphate + ADP. In terms of biological role, major role in the synthesis of nucleoside triphosphates other than ATP. The ATP gamma phosphate is transferred to the NDP beta phosphate via a ping-pong mechanism, using a phosphorylated active-site intermediate. This chain is Nucleoside diphosphate kinase, found in Ehrlichia ruminantium (strain Welgevonden).